Here is a 203-residue protein sequence, read N- to C-terminus: Holliday junction branch migration complex subunit RuvA (203 aa).

Residues 1–65 are domain I; that stretch reads MIAYIHGKLL…EDAFDLYGFP (65 aa). The segment at 66–144 is domain II; the sequence is CFDDREVFRT…TLKSATVRSG (79 aa). The interval 145-155 is flexible linker; it reads ACPVEGDRSEF. Residues 155-203 are domain III; the sequence is FLDALSGLRNLGYGDDEVRDFLKDIFDEEPDLDAGGAIRVALKKISQNK.

The protein belongs to the RuvA family. As to quaternary structure, homotetramer. Forms an RuvA(8)-RuvB(12)-Holliday junction (HJ) complex. HJ DNA is sandwiched between 2 RuvA tetramers; dsDNA enters through RuvA and exits via RuvB. An RuvB hexamer assembles on each DNA strand where it exits the tetramer. Each RuvB hexamer is contacted by two RuvA subunits (via domain III) on 2 adjacent RuvB subunits; this complex drives branch migration. In the full resolvosome a probable DNA-RuvA(4)-RuvB(12)-RuvC(2) complex forms which resolves the HJ.

The protein resides in the cytoplasm. In terms of biological role, the RuvA-RuvB-RuvC complex processes Holliday junction (HJ) DNA during genetic recombination and DNA repair, while the RuvA-RuvB complex plays an important role in the rescue of blocked DNA replication forks via replication fork reversal (RFR). RuvA specifically binds to HJ cruciform DNA, conferring on it an open structure. The RuvB hexamer acts as an ATP-dependent pump, pulling dsDNA into and through the RuvAB complex. HJ branch migration allows RuvC to scan DNA until it finds its consensus sequence, where it cleaves and resolves the cruciform DNA. The chain is Holliday junction branch migration complex subunit RuvA from Maridesulfovibrio salexigens (strain ATCC 14822 / DSM 2638 / NCIMB 8403 / VKM B-1763) (Desulfovibrio salexigens).